Here is a 295-residue protein sequence, read N- to C-terminus: MKKPACIGRFAPTPSGYLHFGSLVAALASYLDARAADGQWLLRMEDLDPPREVAGAQAGILETLERYGFEWDGQMVRQSERHDAYAEILQRWFNHGLAYACTCSRKQLEGFQGIYPGFCRNAGHSPDNAAIRIRVPELEYRFDDRVQGTFKMHLGRESGDFVIRRRDGLYAYQLAVVIDDAWQGVTDIVRGADLLDSTPRQLYLQELLGLPQPRYLHVPLITQPDGHKLGKSYRSPPLPADQATPLLLRALRALGQPLDTHMADGTAQEVLAWGIRHWNADLIPRLRNIEEARID.

Residues 9-13 and E45 each bind L-glutamate; that span reads RFAPT. A 'HIGH' region motif is present at residues 12 to 22; that stretch reads PTPSGYLHFGS. Residues C101, C103, Y115, and C119 each contribute to the Zn(2+) site. Residues Y172 and R190 each coordinate L-glutamate. The 'KMSKS' region motif lies at 228–232; the sequence is KLGKS. K231 is an ATP binding site.

Belongs to the class-I aminoacyl-tRNA synthetase family. GluQ subfamily. Zn(2+) is required as a cofactor.

Its function is as follows. Catalyzes the tRNA-independent activation of glutamate in presence of ATP and the subsequent transfer of glutamate onto a tRNA(Asp). Glutamate is transferred on the 2-amino-5-(4,5-dihydroxy-2-cyclopenten-1-yl) moiety of the queuosine in the wobble position of the QUC anticodon. The polypeptide is Glutamyl-Q tRNA(Asp) synthetase (Pseudomonas syringae pv. syringae (strain B728a)).